The following is a 509-amino-acid chain: MQSWSRVYCSLAKRGHFSRISHGLQAVSAVPLRTYADQPIDADVTVIGSGPGGYVAAIKAAQLGFKTVCVEKNETLGGTCLNVGCIPSKALLNNSHYYHMAHGKDFASRGIEMSEVRLNLEKMMEQKSTAVKALTGGIAHLFKQNKVVHVNGYGKITGKNQVTAKKADGSTQVIDTKNILIATGSEVTPFPGITIDEDTIVSSTGALSLKKVPEKMVVIGAGVIGVELGSVWQRLGADVTAVEFLGHVGGVGIDMEISKNFQRILQKQGFKFKLNTKVTGATKKSDGKIDVSIEGASGGKAEVITCDVLLVCIGRRPFTQNLGLEELGIELDPRGRIPVNTRFQTKIPNIYAIGDVVAGPMLAHKAEDEGIICVEGMAGGAVPIDYNCVPSVIYTHPEVAWVGKSEEQLKEEGIEYKVGKFPFAANSRAKTNADTDGMVKILGQKSTDRVLGAHILGPGAGEMVNEAALALEYGASCEDIARVCHAHPTLSEAFREANLAASFGKSINF.

A mitochondrion-targeting transit peptide spans 1–35 (MQSWSRVYCSLAKRGHFSRISHGLQAVSAVPLRTY). Lys66 is subject to N6-acetyllysine; alternate. Lys66 carries the post-translational modification N6-succinyllysine; alternate. FAD contacts are provided by residues 71–80 (EKNETLGGTC) and Lys89. A disulfide bond links Cys80 and Cys85. 4 positions are modified to N6-acetyllysine; alternate: Lys104, Lys122, Lys132, and Lys143. An N6-succinyllysine; alternate mark is found at Lys104, Lys122, Lys132, and Lys143. Residue Gly154 participates in FAD binding. An N6-succinyllysine mark is found at Lys159 and Lys166. 183–185 (TGS) contacts FAD. Residues 220–227 (GAGVIGVE) and Glu243 contribute to the NAD(+) site. 2 positions are modified to N6-succinyllysine: Lys273 and Lys277. Residue Val278 coordinates NAD(+). A phosphoserine mark is found at Ser285 and Ser297. Gly314 is an NAD(+) binding site. Lys346 bears the N6-acetyllysine mark. Residues Asp355 and 361 to 364 (MLAH) contribute to the FAD site. Lys410 carries the post-translational modification N6-acetyllysine; alternate. Residue Lys410 is modified to N6-succinyllysine; alternate. N6-acetyllysine occurs at positions 417 and 420. The residue at position 430 (Lys430) is an N6-succinyllysine. The active-site Proton acceptor is His487. Ser502 is subject to Phosphoserine. N6-acetyllysine; alternate is present on Lys505. Lys505 is modified (N6-succinyllysine; alternate).

The protein belongs to the class-I pyridine nucleotide-disulfide oxidoreductase family. Homodimer. Part of the multimeric pyruvate dehydrogenase complex that contains multiple copies of pyruvate dehydrogenase (subunits PDHA (PDHA1 or PDHA2) and PDHB, E1), dihydrolipoamide acetyltransferase (DLAT, E2) and lipoamide dehydrogenase (DLD, E3). These subunits are bound to an inner core composed of about 48 DLAT and 12 PDHX molecules (by non covalent bonds). The 2-oxoglutarate dehydrogenase complex is composed of OGDH (2-oxoglutarate dehydrogenase; E1), DLST (dihydrolipoamide succinyltransferase; E2), DLD (dihydrolipoamide dehydrogenase; E3) and the assembly factor KGD4. It contains multiple copies of the three enzymatic components (E1, E2 and E3). In the nucleus, the 2-oxoglutarate dehydrogenase complex associates with KAT2A. Interacts with PDHX. The cofactor is FAD. Tyrosine phosphorylated.

Its subcellular location is the mitochondrion matrix. It localises to the nucleus. The protein localises to the cell projection. It is found in the cilium. The protein resides in the flagellum. Its subcellular location is the cytoplasmic vesicle. It localises to the secretory vesicle. The protein localises to the acrosome. The catalysed reaction is N(6)-[(R)-dihydrolipoyl]-L-lysyl-[protein] + NAD(+) = N(6)-[(R)-lipoyl]-L-lysyl-[protein] + NADH + H(+). Its function is as follows. Lipoamide dehydrogenase is a component of the glycine cleavage system as well as an E3 component of three alpha-ketoacid dehydrogenase complexes (pyruvate-, alpha-ketoglutarate-, and branched-chain amino acid-dehydrogenase complex). The 2-oxoglutarate dehydrogenase complex is mainly active in the mitochondrion. A fraction of the 2-oxoglutarate dehydrogenase complex also localizes in the nucleus and is required for lysine succinylation of histones: associates with KAT2A on chromatin and provides succinyl-CoA to histone succinyltransferase KAT2A. In monomeric form may have additional moonlighting function as serine protease. Involved in the hyperactivation of spermatazoa during capacitation and in the spermatazoal acrosome reaction. The sequence is that of Dihydrolipoyl dehydrogenase, mitochondrial (DLD) from Canis lupus familiaris (Dog).